A 764-amino-acid polypeptide reads, in one-letter code: Polyribonucleotide nucleotidyltransferase (764 aa).

Residues aspartate 541 and aspartate 547 each coordinate Mg(2+). The 60-residue stretch at 607–666 (PRVTAIKIPVDKIGEVIGPKGKVINQITEDTGANISIEDDGTVFVGATDGPSAQAAIDAI) folds into the KH domain. The S1 motif domain maps to 678–747 (GERFLGTVVK…NRGKISLVPV (70 aa)).

It belongs to the polyribonucleotide nucleotidyltransferase family. Mg(2+) is required as a cofactor.

The protein resides in the cytoplasm. The enzyme catalyses RNA(n+1) + phosphate = RNA(n) + a ribonucleoside 5'-diphosphate. In terms of biological role, involved in mRNA degradation. Catalyzes the phosphorolysis of single-stranded polyribonucleotides processively in the 3'- to 5'-direction. In Nocardia farcinica (strain IFM 10152), this protein is Polyribonucleotide nucleotidyltransferase.